The primary structure comprises 153 residues: Endoribonuclease YbeY (153 aa).

Zn(2+)-binding residues include His114, His118, and His124.

Belongs to the endoribonuclease YbeY family. The cofactor is Zn(2+).

The protein resides in the cytoplasm. Its function is as follows. Single strand-specific metallo-endoribonuclease involved in late-stage 70S ribosome quality control and in maturation of the 3' terminus of the 16S rRNA. This chain is Endoribonuclease YbeY, found in Shewanella baltica (strain OS185).